A 397-amino-acid polypeptide reads, in one-letter code: CCA-adding enzyme (397 aa).

Positions 26 and 29 each coordinate ATP. CTP is bound by residues G26 and R29. Residues D39 and D41 each contribute to the Mg(2+) site. Positions 110, 153, 156, 159, and 162 each coordinate ATP. The CTP site is built by R110, D153, R156, R159, and R162.

This sequence belongs to the tRNA nucleotidyltransferase/poly(A) polymerase family. Bacterial CCA-adding enzyme type 3 subfamily. As to quaternary structure, homodimer. It depends on Mg(2+) as a cofactor.

The enzyme catalyses a tRNA precursor + 2 CTP + ATP = a tRNA with a 3' CCA end + 3 diphosphate. It carries out the reaction a tRNA with a 3' CCA end + 2 CTP + ATP = a tRNA with a 3' CCACCA end + 3 diphosphate. In terms of biological role, catalyzes the addition and repair of the essential 3'-terminal CCA sequence in tRNAs without using a nucleic acid template. Adds these three nucleotides in the order of C, C, and A to the tRNA nucleotide-73, using CTP and ATP as substrates and producing inorganic pyrophosphate. tRNA 3'-terminal CCA addition is required both for tRNA processing and repair. Also involved in tRNA surveillance by mediating tandem CCA addition to generate a CCACCA at the 3' terminus of unstable tRNAs. While stable tRNAs receive only 3'-terminal CCA, unstable tRNAs are marked with CCACCA and rapidly degraded. This is CCA-adding enzyme from Bacillus cereus (strain AH187).